A 160-amino-acid chain; its full sequence is MSVTKKPDLNDPVLRAKLAKGFGHNTYGEPAWPNDLLYIFPVVIFGTFACCIGLAVLDPAAMGEPANPFATPLEILPEWYFYPVFQILRTVPNKLLGVLAMAAVPVGLLTVPFIESINKFQNPYRRPIATILFLVGTLVAVWLGIGATFPIDISLTLGLF.

3 consecutive transmembrane segments (helical) span residues Leu-36–Val-56, Leu-95–Glu-115, and Ile-131–Ile-151.

This sequence belongs to the cytochrome b family. PetD subfamily. In terms of assembly, the 4 large subunits of the cytochrome b6-f complex are cytochrome b6, subunit IV (17 kDa polypeptide, petD), cytochrome f and the Rieske protein, while the 4 small subunits are petG, petL, petM and petN. The complex functions as a dimer.

Its subcellular location is the plastid. It is found in the chloroplast thylakoid membrane. Component of the cytochrome b6-f complex, which mediates electron transfer between photosystem II (PSII) and photosystem I (PSI), cyclic electron flow around PSI, and state transitions. The chain is Cytochrome b6-f complex subunit 4 from Chlamydomonas moewusii (Chlamydomonas eugametos).